The following is a 338-amino-acid chain: 1-aminocyclopropane-1-carboxylate deaminase (338 aa).

Lysine 51 carries the post-translational modification N6-(pyridoxal phosphate)lysine. Catalysis depends on serine 78, which acts as the Nucleophile.

The protein belongs to the ACC deaminase/D-cysteine desulfhydrase family. As to quaternary structure, homotrimer. Pyridoxal 5'-phosphate serves as cofactor.

The enzyme catalyses 1-aminocyclopropane-1-carboxylate + H2O = 2-oxobutanoate + NH4(+). Its function is as follows. Catalyzes a cyclopropane ring-opening reaction, the irreversible conversion of 1-aminocyclopropane-1-carboxylate (ACC) to ammonia and alpha-ketobutyrate. Allows growth on ACC as a nitrogen source. The sequence is that of 1-aminocyclopropane-1-carboxylate deaminase from Burkholderia vietnamiensis (strain G4 / LMG 22486) (Burkholderia cepacia (strain R1808)).